A 203-amino-acid chain; its full sequence is CASP-like protein 2U6 (203 aa).

The Cytoplasmic portion of the chain corresponds to 1 to 31 (MSEHRIPVAADKKISPPISAGEQKGCKGLKR). The chain crosses the membrane as a helical span at residues 32-52 (TDLMLRFAAFVCCTVTMVVLI). Over 53 to 84 (TDKQTSAIQVPGFNNLTITKTVSFDLAKAFVY) the chain is Extracellular. N-linked (GlcNAc...) asparagine glycosylation occurs at Asn67. The helical transmembrane segment at 85-105 (LVSAAGIGAGYTLLVLVLSII) threads the bilayer. Residues 106–111 (SAERSK) are Cytoplasmic-facing. Residues 112–132 (AIAWFIFVFDQLITYVLLAAA) form a helical membrane-spanning segment. Over 133–164 (AASTEVAYMGAHAPPEASWLKVCSLFGRFCHQ) the chain is Extracellular. A helical membrane pass occupies residues 165 to 185 (LGASLVTSLISTVLFAFSAAI). Residues 186-203 (SAYYLFSNTNVRPAYSKG) lie on the Cytoplasmic side of the membrane.

The protein belongs to the Casparian strip membrane proteins (CASP) family. As to quaternary structure, homodimer and heterodimers.

The protein localises to the cell membrane. This chain is CASP-like protein 2U6, found in Selaginella moellendorffii (Spikemoss).